A 692-amino-acid chain; its full sequence is Elongation factor G (692 aa).

A tr-type G domain is found at 9-284 (HKVRNIGIAA…AVVDYLPAPD (276 aa)). Residues 18-25 (AHIDAGKT), 82-86 (DTPGH), and 136-139 (NKMD) each bind GTP.

Belongs to the TRAFAC class translation factor GTPase superfamily. Classic translation factor GTPase family. EF-G/EF-2 subfamily.

It is found in the cytoplasm. Catalyzes the GTP-dependent ribosomal translocation step during translation elongation. During this step, the ribosome changes from the pre-translocational (PRE) to the post-translocational (POST) state as the newly formed A-site-bound peptidyl-tRNA and P-site-bound deacylated tRNA move to the P and E sites, respectively. Catalyzes the coordinated movement of the two tRNA molecules, the mRNA and conformational changes in the ribosome. This chain is Elongation factor G, found in Campylobacter concisus (strain 13826).